The primary structure comprises 617 residues: Bifunctional TH2 protein, mitochondrial (617 aa).

The N-terminal 28 residues, 1–28, are a transit peptide targeting the mitochondrion; the sequence is MRFLFPTRLINNSSLGLLRSPHTTAPIR. Asp107 is a binding site for substrate. Cys213 (nucleophile) is an active-site residue. The substrate site is built by Tyr217 and Tyr244. The active-site Proton donor is Glu286.

The protein in the N-terminal section; belongs to the TenA family. This sequence in the C-terminal section; belongs to the HAD-like hydrolase superfamily.

It is found in the mitochondrion. It localises to the cytoplasm. It carries out the reaction thiamine phosphate + H2O = thiamine + phosphate. The enzyme catalyses 4-amino-5-aminomethyl-2-methylpyrimidine + H2O = 4-amino-5-hydroxymethyl-2-methylpyrimidine + NH4(+). May be involved in the salvage of thiamine breakdown products. This protein has a haloacid dehalogenase family domain fused to its TenA domain. Phosphatase with the highest activity against thiamine monophosphate (ThMP) and, with a lower activity, against thiamine diphosphate (ThDP), flavin mononucleotide, inorganic pyrophosphate, CTP and dATP. Has a thiamine salvage hydrolase activity, but only against 4-amino-5-aminomethyl-2-methylpyrimidine (amino-HMP) and not against N-formylamino-HMP, desthiothiamine, thiamine, ThMP, and ThDP. In Arabidopsis thaliana (Mouse-ear cress), this protein is Bifunctional TH2 protein, mitochondrial.